The chain runs to 859 residues: Cadherin-related family member 1 (859 aa).

A signal peptide spans 1–21 (MRRGPQVALVLGLLCIYLAQA). Topologically, residues 22–701 (NFAPHFFDNG…LIQTKDNPMK (680 aa)) are extracellular. Cadherin domains lie at 36–135 (NGNM…APRF), 136–247 (LQEP…APIF), 248–354 (VGTP…PPTF), 360–473 (PQNK…VPKF), 474–577 (TSHY…YPQF), and 569–691 (DVND…MAAF). Residues N58 and N89 are each glycosylated (N-linked (GlcNAc...) asparagine). N-linked (GlcNAc...) asparagine glycans are attached at residues N288 and N297. Residues 702–722 (AVGVLAGVMAIVVAITVLIST) form a helical membrane-spanning segment. Topologically, residues 723–859 (ATFWRNKKSN…KKSLGNKAYV (137 aa)) are cytoplasmic. The segment at 789–859 (PPRAPALPPP…KKSLGNKAYV (71 aa)) is disordered. Residues 790-800 (PRAPALPPPPK) are compositionally biased toward pro residues. Residues 802–816 (ASSTVAQQTVPTVSG) are compositionally biased toward polar residues. Residues 817–827 (SLTPQPSQQLP) show a composition bias toward low complexity.

In terms of assembly, interacts with PROM1. In terms of processing, undergoes proteolytic cleavage; produces a soluble 95 kDa N-terminal fragment and a 25 kDa cell-associated C-terminal fragment. In terms of tissue distribution, expressed in the retina. Strongly expressed by the mitral and tufted cells in the main and accessory olfactory bulbs. Also expressed in the septum and olfactory cortex. Weakly expressed in the triangular septal nucleus and piriform cortex.

It is found in the cell membrane. Potential calcium-dependent cell-adhesion protein. May be required for the structural integrity of the outer segment (OS) of photoreceptor cells. This is Cadherin-related family member 1 (Cdhr1) from Rattus norvegicus (Rat).